We begin with the raw amino-acid sequence, 380 residues long: S-phase entry cyclin-6 (380 aa).

Residues 63–91 are disordered; sequence PRGKLQRDSTHLEKTRKRQLSNDSTDPIE.

Belongs to the cyclin family. Cyclin AB subfamily.

In terms of biological role, involved in G1/S and or S phase progression. Interacts with CDC28. This is S-phase entry cyclin-6 (CLB6) from Saccharomyces cerevisiae (strain ATCC 204508 / S288c) (Baker's yeast).